Here is a 242-residue protein sequence, read N- to C-terminus: Transcription factor bHLH100 (242 aa).

The bHLH domain occupies 61 to 113 (MKKLNHNASERERRKKINTMFSSLRSCLPPTNQTKKLSVSATVSQALKYIPEL).

Homodimer. As to expression, expressed constitutively in roots, leaves, and stems.

It localises to the nucleus. Plays a role in metal homeostasis. Confers tolerance to high zinc (Zn) and nickel (Ni). The protein is Transcription factor bHLH100 (BHLH100) of Arabidopsis thaliana (Mouse-ear cress).